A 185-amino-acid chain; its full sequence is MNNTGLSVKKVVAIGIGSAIYVILARFTSIPTPIPNTNIELVFPFLAFFASIYGATVGFSVGFIGHALSDFIMYGQTWWSWVLATGILGWIIGLAYKRLDLKNGIFGLKQIILFNIVQIIANILAWIVVAPIGDIIIYSEPANKVFVQGISATISNGISILIIGTILLKAYASTKIKKGSLRKED.

5 helical membrane-spanning segments follow: residues 11 to 31, 45 to 65, 72 to 92, 111 to 131, and 146 to 166; these read VVAI…TSIP, FLAF…GFIG, IMYG…GWII, IILF…VVAP, and FVQG…IGTI.

It belongs to the UPF0397 family.

Its subcellular location is the cell membrane. In Lactobacillus acidophilus (strain ATCC 700396 / NCK56 / N2 / NCFM), this protein is UPF0397 protein LBA0922.